Consider the following 285-residue polypeptide: Bifunctional protein FolD (285 aa).

NADP(+) contacts are provided by residues 165–167 (GRS) and S190.

It belongs to the tetrahydrofolate dehydrogenase/cyclohydrolase family. In terms of assembly, homodimer.

The enzyme catalyses (6R)-5,10-methylene-5,6,7,8-tetrahydrofolate + NADP(+) = (6R)-5,10-methenyltetrahydrofolate + NADPH. It catalyses the reaction (6R)-5,10-methenyltetrahydrofolate + H2O = (6R)-10-formyltetrahydrofolate + H(+). Its pathway is one-carbon metabolism; tetrahydrofolate interconversion. Catalyzes the oxidation of 5,10-methylenetetrahydrofolate to 5,10-methenyltetrahydrofolate and then the hydrolysis of 5,10-methenyltetrahydrofolate to 10-formyltetrahydrofolate. This Burkholderia multivorans (strain ATCC 17616 / 249) protein is Bifunctional protein FolD.